Reading from the N-terminus, the 178-residue chain is Beta-lytic metalloendopeptidase (178 aa).

Residues Cys-65 and Cys-111 are joined by a disulfide bond. 2 residues coordinate Zn(2+): His-120 and His-122. A disulfide bridge connects residues Cys-155 and Cys-168.

Belongs to the peptidase M23A family. It depends on Zn(2+) as a cofactor.

The catalysed reaction is Cleavage of N-acetylmuramoyl-|-Ala, and of the insulin B chain at 23-Gly-|-Phe-24 &gt; 18-Val-|-Cys(SO3H).. The protein is Beta-lytic metalloendopeptidase of Lysobacter enzymogenes.